Reading from the N-terminus, the 181-residue chain is ADP-ribosylation factor 3 (181 aa).

Gly2 carries N-myristoyl glycine lipidation. GTP is bound by residues 24–31, 67–71, and 126–129; these read GLDAAGKT, DVGGQ, and NKQD.

Belongs to the small GTPase superfamily. Arf family. In terms of assembly, interacts with PRKCABP. Interacts with PI4KB and NCS1/FREQ at the Golgi complex.

Its subcellular location is the golgi apparatus. The protein localises to the cytoplasm. It is found in the perinuclear region. GTP-binding protein that functions as an allosteric activator of the cholera toxin catalytic subunit, an ADP-ribosyltransferase. Involved in protein trafficking; may modulate vesicle budding and uncoating within the Golgi apparatus. The sequence is that of ADP-ribosylation factor 3 (ARF3) from Bos taurus (Bovine).